The primary structure comprises 204 residues: Probable nicotinate-nucleotide adenylyltransferase (204 aa).

Belongs to the NadD family.

It catalyses the reaction nicotinate beta-D-ribonucleotide + ATP + H(+) = deamido-NAD(+) + diphosphate. It participates in cofactor biosynthesis; NAD(+) biosynthesis; deamido-NAD(+) from nicotinate D-ribonucleotide: step 1/1. Its function is as follows. Catalyzes the reversible adenylation of nicotinate mononucleotide (NaMN) to nicotinic acid adenine dinucleotide (NaAD). The sequence is that of Probable nicotinate-nucleotide adenylyltransferase from Clostridium beijerinckii (strain ATCC 51743 / NCIMB 8052) (Clostridium acetobutylicum).